A 153-amino-acid chain; its full sequence is MKHLRPQFPLILAIYCFCMLQIPSSGFPQPLADPSDGLDIVQLEQLAYCLSQWAPLSRQPKDNQDIYKRFLFHYSRTQEATHPVKTGFPPVHPLMHLAAKLANRRMKRILQRGSGTAAVDFTKKDHTATWGRPFFLFRPRNGRNIEDEAQIQW.

An N-terminal signal peptide occupies residues 1–26 (MKHLRPQFPLILAIYCFCMLQIPSSG). 3 propeptides span residues 27–69 (FPQP…IYKR), 70–105 (FLFH…ANRR), and 106–108 (MKR). Residue Asn141 is modified to Asparagine amide. A propeptide spanning residues 144–153 (NIEDEAQIQW) is cleaved from the precursor.

The protein belongs to the NmU family.

Its subcellular location is the secreted. Implicated in the regulation of circadian rhythms through autocrine and/or paracrine actions. The polypeptide is Neuromedin-S (NMS) (Homo sapiens (Human)).